A 462-amino-acid polypeptide reads, in one-letter code: Prenyltransferase phqI (462 aa).

Glu101 serves as a coordination point for brevianamide F. Arg117, Lys204, Tyr206, Lys273, Tyr275, Tyr357, Tyr442, and Tyr446 together coordinate dimethylallyl diphosphate.

It belongs to the tryptophan dimethylallyltransferase family.

The protein operates within alkaloid biosynthesis. Functionally, prenyltransferase; part of the gene cluster that mediates the biosynthesis of paraherquamide, a fungal indole alkaloid that belongs to a family of natural products containing a characteristic bicyclo[2.2.2]diazaoctane core. The first steps in the biosynthesis of paraherquamide is the production of the beta-methyl-proline precursor from L-isoleucine. They require oxidation of a terminally hydroxylated L-isoleucine to the corresponding aldehyde by enzymes which have still to be identified. Spontaneous cyclization and dehydration would yield the 4-methyl pyrolline-5-carboxylic acid, which is then reduced by the pyrroline-5-carboxylate reductase phqD leading to the beta-methyl-proline precursor. The next step of paraherquamide biosynthesis involves coupling of beta-methyl-proline and L-tryptophan by the bimodular NRPS phqB, to produce a monooxopiperazine intermediate. The reductase (R) domain of phqB utilizes NADPH for hydride transfer to reduce the thioester bond of the T domain-tethered linear dipeptide to a hemithioaminal intermediate, which spontaneously cleaves the C-S bond to release the aldehyde product. This compound undergoes spontaneous cyclization and dehydration to give a dienamine which is reverse prenylated at C-2 by the reverse prenyltransferase phqJ. The other prenyltransferase present in the cluster, phqI may be a redundant gene in the pathway. During biosynthetic assembly, the key step to produce the polycyclic core is catalyzed by the bifunctional reductase and intramolecular [4+2] Diels-Alderase, phqE, resulting in formation of the [2.2.2] diazaoctane intermediate preparaherquamide. Following formation of preparaherquamide, an indole 2,3-epoxidation-initiated pinacol-like rearrangement is catalyzed by the phqK FAD-dependent monooxygenase. The prenyltransferase phqA, the cytochrome P450 monooxygenase phqL, and the FAD-linked oxidoreductase phqH (or the cytochrome P450 monooxygenase phqM), are proposed to be involved in the formation of the pyran ring. The FAD-dependent monooxygenase phqK is likely responsible for generation of the spiro-oxindole, and the N-methylation is likely mediated by the phqN methyltransferase leading to the isolable natural product paraherquamide F. However, the order of these biosynthetic steps has still to be determined. In late-stage paraherquamide biosynthesis, the third P450 monooxygenase, phqO, is probably responsible for the C-14 hydroxylation, transforming paraherquamide F to paraherquamide G, and paraherquamide E to the final product paraherquamide A. The expansion from the 6-membered ring pyran (in paraherquamides F and G) to the 7-membered dioxepin ring (in paraherquamides A and E) represents a poorly understood but intriguing process that probably involves the 2-oxoglutarate-dependent dioxygenase phqC. Finally, the remaining members of the paraherquamide cluster, including phqI as well as phqM (or phqH), do not have a clearly prescribed role and appear to be redundant. This is Prenyltransferase phqI from Penicillium fellutanum.